The following is a 669-amino-acid chain: Zeaxanthin epoxidase, chloroplastic (669 aa).

A chloroplast-targeting transit peptide spans 1 to 49; the sequence is MYSTVFYTSVHPSTSVLSRKQLPLLISKDFSAELYHSLPCRSLENGHIN. Residues 87-115 and 365-378 each bind FAD; these read KVLVAGGGIGGLVFALAAKKRGFDVLVFE and TFSWGRGRVTLLGD. Residues 553–617 form the FHA domain; sequence IVLSRDEDVP…HGTWVTDNEG (65 aa).

Requires FAD as cofactor.

Its subcellular location is the plastid. The protein resides in the chloroplast. It carries out the reaction all-trans-zeaxanthin + 4 reduced [2Fe-2S]-[ferredoxin] + 2 O2 + 4 H(+) = all-trans-violaxanthin + 4 oxidized [2Fe-2S]-[ferredoxin] + 2 H2O. It participates in plant hormone biosynthesis; abscisate biosynthesis. Functionally, converts zeaxanthin into antheraxanthin and subsequently violaxanthin. Involved in the epoxidation of zeaxanthin. Plays an important role in resistance to stresses, seed development and dormancy. The polypeptide is Zeaxanthin epoxidase, chloroplastic (Solanum lycopersicum (Tomato)).